The primary structure comprises 1184 residues: von Willebrand factor A domain-containing protein 3A (1184 aa).

Residues 1 to 24 form the signal peptide; sequence MKKYRKISIGCFAMATQTSHVFHG. A disordered region spans residues 40-62; sequence GRDSKKPLKQKNMNGLGQNSDNG. A compositionally biased stretch (polar residues) spans 50–62; sequence KNMNGLGQNSDNG. Residues 333–357 adopt a coiled-coil conformation; that stretch reads TSRDMDELLAEIQKAQSLLSHVQAL. The region spanning 511–708 is the VWFA 1 domain; the sequence is RVVVLLDISA…SIMSEMEKAL (198 aa). Asn-709 carries an N-linked (GlcNAc...) asparagine glycan. The interval 729-780 is disordered; that stretch reads LGSSALPKEKPKTLQLRSQPKKLCPPRPTVPLGARMSIKDDPDREKSPPLKS. The span at 765–776 shows a compositional bias: basic and acidic residues; the sequence is SIKDDPDREKSP. The region spanning 959-1131 is the VWFA 2 domain; the sequence is KVCILLDTSG…KIHSLLTKGF (173 aa).

It is found in the secreted. This Homo sapiens (Human) protein is von Willebrand factor A domain-containing protein 3A (VWA3A).